The sequence spans 253 residues: 4-hydroxy-tetrahydrodipicolinate reductase (253 aa).

16–21 is a binding site for NAD(+); sequence GDTGRM. An NADP(+)-binding site is contributed by Arg-44. Residues 85–87 and 111–114 contribute to the NAD(+) site; these read GTT and CANT. His-144 functions as the Proton donor/acceptor in the catalytic mechanism. His-145 lines the (S)-2,3,4,5-tetrahydrodipicolinate pocket. Lys-148 serves as the catalytic Proton donor. 154-155 serves as a coordination point for (S)-2,3,4,5-tetrahydrodipicolinate; sequence GT.

Belongs to the DapB family.

It is found in the cytoplasm. The enzyme catalyses (S)-2,3,4,5-tetrahydrodipicolinate + NAD(+) + H2O = (2S,4S)-4-hydroxy-2,3,4,5-tetrahydrodipicolinate + NADH + H(+). The catalysed reaction is (S)-2,3,4,5-tetrahydrodipicolinate + NADP(+) + H2O = (2S,4S)-4-hydroxy-2,3,4,5-tetrahydrodipicolinate + NADPH + H(+). Its pathway is amino-acid biosynthesis; L-lysine biosynthesis via DAP pathway; (S)-tetrahydrodipicolinate from L-aspartate: step 4/4. Its function is as follows. Catalyzes the conversion of 4-hydroxy-tetrahydrodipicolinate (HTPA) to tetrahydrodipicolinate. The polypeptide is 4-hydroxy-tetrahydrodipicolinate reductase (Chlamydia trachomatis serovar A (strain ATCC VR-571B / DSM 19440 / HAR-13)).